The primary structure comprises 490 residues: Cobyric acid synthase (490 aa).

The GATase cobBQ-type domain maps to 252 to 439 (RLKVVVPVLP…LHGLFESTAA (188 aa)). The active-site Nucleophile is the Cys-333. The active site involves His-431.

Belongs to the CobB/CobQ family. CobQ subfamily.

It participates in cofactor biosynthesis; adenosylcobalamin biosynthesis. Its function is as follows. Catalyzes amidations at positions B, D, E, and G on adenosylcobyrinic A,C-diamide. NH(2) groups are provided by glutamine, and one molecule of ATP is hydrogenolyzed for each amidation. The polypeptide is Cobyric acid synthase (Pseudomonas aeruginosa (strain UCBPP-PA14)).